The sequence spans 397 residues: DnaJ homolog subfamily A member 4 (397 aa).

A J domain is found at Glu-4–Gln-70. Phosphoserine is present on Ser-18. The CR-type zinc finger occupies Gly-122–Lys-206. 8 residues coordinate Zn(2+): Cys-135, Cys-138, Cys-151, Cys-154, Cys-178, Cys-181, Cys-194, and Cys-197. 4 CXXCXGXG motif repeats span residues Cys-135–Gly-142, Cys-151–Gly-158, Cys-178–Gly-185, and Cys-194–Lys-201. Cys-394 is subject to Cysteine methyl ester. The S-farnesyl cysteine moiety is linked to residue Cys-394. A propeptide spans Gln-395–Ala-397 (removed in mature form).

Its subcellular location is the membrane. The chain is DnaJ homolog subfamily A member 4 (DNAJA4) from Homo sapiens (Human).